Consider the following 158-residue polypeptide: Putative pre-16S rRNA nuclease (158 aa).

It belongs to the YqgF nuclease family.

The protein localises to the cytoplasm. In terms of biological role, could be a nuclease involved in processing of the 5'-end of pre-16S rRNA. The sequence is that of Putative pre-16S rRNA nuclease from Paracoccus denitrificans (strain Pd 1222).